A 409-amino-acid polypeptide reads, in one-letter code: Serine/threonine transporter SstT (409 aa).

The next 9 membrane-spanning stretches (helical) occupy residues 14 to 34 (GNLI…GFIA), 57 to 77 (GALK…SIII), 89 to 109 (IIIL…VVSF), 149 to 169 (AISS…GIAL), 190 to 210 (IVKF…ATSV), 224 to 244 (LLLV…AAIV), 296 to 316 (ISIP…IAVL), 338 to 358 (IIAA…LMLI), and 365 to 385 (FGIS…IGVV).

It belongs to the dicarboxylate/amino acid:cation symporter (DAACS) (TC 2.A.23) family.

Its subcellular location is the cell inner membrane. The catalysed reaction is L-serine(in) + Na(+)(in) = L-serine(out) + Na(+)(out). It carries out the reaction L-threonine(in) + Na(+)(in) = L-threonine(out) + Na(+)(out). Its function is as follows. Involved in the import of serine and threonine into the cell, with the concomitant import of sodium (symport system). In Campylobacter fetus subsp. fetus (strain 82-40), this protein is Serine/threonine transporter SstT.